Reading from the N-terminus, the 254-residue chain is MSEQQMTNEAAKTLDGWYALHDFRTMDWASWKLLSSDERQSIIHEFTGLLEKWGVAQKEGKGSQTLYSIVGQKADFMLMILRPTMEELNQIELEFNKSRLAEFTIPAYSYVSVVELSNYLASGDGDPYENPHVRARLYPELPESKYVCFYPMDKRRSGNDNWYMLSMEERRNLMRSHGLIGRSYAGKVKQIITGSVGFDDYEWGVTLFSDDVLQFKKLVYEMRFDEVSARYGEFGSFFVGNHLSLDTLPQFLYV.

Fe-coproporphyrin III is bound by residues Arg-136, 150 to 154, His-177, Gln-190, and Ser-228; that span reads YPMDK. Residue Tyr-150 is part of the active site.

This sequence belongs to the ChdC family. Type 1 subfamily. It depends on Fe-coproporphyrin III as a cofactor.

It carries out the reaction Fe-coproporphyrin III + 2 H2O2 + 2 H(+) = heme b + 2 CO2 + 4 H2O. The catalysed reaction is Fe-coproporphyrin III + H2O2 + H(+) = harderoheme III + CO2 + 2 H2O. It catalyses the reaction harderoheme III + H2O2 + H(+) = heme b + CO2 + 2 H2O. It participates in porphyrin-containing compound metabolism; protoheme biosynthesis. Involved in coproporphyrin-dependent heme b biosynthesis. Catalyzes the decarboxylation of Fe-coproporphyrin III (coproheme) to heme b (protoheme IX), the last step of the pathway. The reaction occurs in a stepwise manner with a three-propionate harderoheme intermediate. This is Coproheme decarboxylase from Bacillus subtilis (strain 168).